Consider the following 58-residue polypeptide: MQMFPPSPLFFFLQLLKQSSRRLEHTFVFLRNFSLMLLRYIGKKRRATRFWDPRRGTP.

Detected at low levels in the ductal cells of the salivary gland but not in the acinar cells (at protein level). Expressed in endometrium (at protein level). Expressed in epithelial cells within the acinar ducts of the prostate.

The chain is T-cell receptor gamma alternate reading frame protein from Homo sapiens (Human).